A 102-amino-acid polypeptide reads, in one-letter code: Mitochondrial import inner membrane translocase subunit Tim10 B (102 aa).

A Twin CX3C motif motif is present at residues Cys27–Cys51. 2 cysteine pairs are disulfide-bonded: Cys27–Cys51 and Cys31–Cys47.

In terms of assembly, component of the TIM22 complex, which core is composed of TIMM22, associated with TIMM10 (TIMM10A and/or TIMM10B), TIMM9, AGK and TIMM29.

It localises to the mitochondrion inner membrane. In terms of biological role, component of the TIM22 complex, a complex that mediates the import and insertion of multi-pass transmembrane proteins into the mitochondrial inner membrane. The TIM22 complex forms a twin-pore translocase that uses the membrane potential as the external driving force. In the TIM22 complex, it may act as a docking point for the soluble 70 kDa complex that guides the target proteins in transit through the aqueous mitochondrial intermembrane space. This is Mitochondrial import inner membrane translocase subunit Tim10 B (TIMM10B) from Pongo abelii (Sumatran orangutan).